Here is an 849-residue protein sequence, read N- to C-terminus: Coiled-coil domain-containing protein 87 (849 aa).

Residues Arg-387–Asp-415 adopt a coiled-coil conformation.

Belongs to the CCDC87 family.

Plays a role in spermatogenesis, where it is important for normal sperm head morphology. Also required for the acrosome reaction and thus normal male fertility. This chain is Coiled-coil domain-containing protein 87 (CCDC87), found in Homo sapiens (Human).